We begin with the raw amino-acid sequence, 246 residues long: Chloroplastic group IIB intron splicing facilitator CRS2-A, chloroplastic (246 aa).

A chloroplast-targeting transit peptide spans 1–34; sequence MFCASSSPITSPLYPKAYKFSQTKSNSKRFSSLR. Position 64 (tyrosine 64) interacts with tRNA. Residue histidine 69 is the Proton acceptor of the active site. Residues tyrosine 114, asparagine 116, and asparagine 162 each contribute to the tRNA site.

The protein belongs to the PTH family. CRS2 subfamily. Part of large ribonucleo-protein complexes that include group IIB introns and either CAF1 or CAF2.

Its subcellular location is the plastid. The protein localises to the chloroplast stroma. Required for the splicing of group IIB introns in chloroplasts. The protein is Chloroplastic group IIB intron splicing facilitator CRS2-A, chloroplastic (CRS2A) of Arabidopsis thaliana (Mouse-ear cress).